The following is a 407-amino-acid chain: Aminomethyltransferase, mitochondrial (407 aa).

The transit peptide at 1 to 29 directs the protein to the mitochondrion; that stretch reads MRGGLWQLGQSITRRLGQSDKKTIVRRCY. Positions 234, 265, and 403 each coordinate substrate.

This sequence belongs to the GcvT family. In terms of assembly, the glycine cleavage system is composed of four proteins: P, T, L and H.

It is found in the mitochondrion. It carries out the reaction N(6)-[(R)-S(8)-aminomethyldihydrolipoyl]-L-lysyl-[protein] + (6S)-5,6,7,8-tetrahydrofolate = N(6)-[(R)-dihydrolipoyl]-L-lysyl-[protein] + (6R)-5,10-methylene-5,6,7,8-tetrahydrofolate + NH4(+). In terms of biological role, the glycine cleavage system catalyzes the degradation of glycine. In Flaveria anomala (Yellowtops), this protein is Aminomethyltransferase, mitochondrial (GDCST).